Reading from the N-terminus, the 328-residue chain is Biotin synthase (328 aa).

The Radical SAM core domain occupies 42-267; the sequence is YHVQLASLLS…LMPGSRVRLS (226 aa). 3 residues coordinate [4Fe-4S] cluster: Cys57, Cys61, and Cys64. [2Fe-2S] cluster-binding residues include Cys101, Cys133, Cys193, and Arg265.

Belongs to the radical SAM superfamily. Biotin synthase family. As to quaternary structure, homodimer. The cofactor is [4Fe-4S] cluster. It depends on [2Fe-2S] cluster as a cofactor.

The catalysed reaction is (4R,5S)-dethiobiotin + (sulfur carrier)-SH + 2 reduced [2Fe-2S]-[ferredoxin] + 2 S-adenosyl-L-methionine = (sulfur carrier)-H + biotin + 2 5'-deoxyadenosine + 2 L-methionine + 2 oxidized [2Fe-2S]-[ferredoxin]. Its pathway is cofactor biosynthesis; biotin biosynthesis; biotin from 7,8-diaminononanoate: step 2/2. Its function is as follows. Catalyzes the conversion of dethiobiotin (DTB) to biotin by the insertion of a sulfur atom into dethiobiotin via a radical-based mechanism. In Synechococcus sp. (strain CC9311), this protein is Biotin synthase.